We begin with the raw amino-acid sequence, 163 residues long: Staphylokinase (163 aa).

Positions Met1–Ala27 are cleaved as a signal peptide.

Belongs to the staphylokinase family.

Its subcellular location is the secreted. Potent plasminogen activator that converts plasminogen into plasmin. It forms a 1:1 complex with plasmin, which in turn activates other plasminogen molecules. The protein is Staphylokinase (sak) of Staphylococcus aureus (strain MRSA252).